Consider the following 269-residue polypeptide: WW domain-binding protein 1 (269 aa).

2 short sequence motifs (PPxY motif) span residues 124 to 127 (PPAY) and 137 to 141 (PPPPY). 2 disordered regions span residues 169-203 (EGTNVEGVSSHQSAPPHQEGEPGAGVTPASTPPSC) and 249-269 (PPESVPQIFPMGLSSSEGDIP). A compositionally biased stretch (polar residues) spans 174 to 183 (EGVSSHQSAP).

In terms of assembly, interacts with NEDD4. Binds to the WW domain of YAP1, WWP1 and WWP2. Interacts with WWOX. In terms of tissue distribution, expressed in most tissues but at significantly lower levels in placenta, lung, liver, and kidney.

The sequence is that of WW domain-binding protein 1 (WBP1) from Homo sapiens (Human).